Here is a 161-residue protein sequence, read N- to C-terminus: Eukaryotic translation initiation factor 5A-1 (161 aa).

The segment covering 1–12 (MSDEEHQFESKA) has biased composition (basic and acidic residues). The tract at residues 1 to 21 (MSDEEHQFESKADAGASKTYP) is disordered. Lys-52 carries the post-translational modification Hypusine.

The protein belongs to the eIF-5A family. Post-translationally, lys-52 undergoes hypusination, a unique post-translational modification that consists in the addition of a butylamino group from spermidine to lysine side chain, leading to the formation of the unusual amino acid hypusine. eIF-5As are the only known proteins to undergo this modification, which is essential for their function.

Translation factor that promotes translation elongation and termination, particularly upon ribosome stalling at specific amino acid sequence contexts. Binds between the exit (E) and peptidyl (P) site of the ribosome and promotes rescue of stalled ribosome: specifically required for efficient translation of polyproline-containing peptides as well as other motifs that stall the ribosome. Acts as a ribosome quality control (RQC) cofactor by joining the RQC complex to facilitate peptidyl transfer during CAT tailing step. The sequence is that of Eukaryotic translation initiation factor 5A-1 from Medicago sativa (Alfalfa).